A 1809-amino-acid polypeptide reads, in one-letter code: Pyochelin synthetase PchF (1809 aa).

A condensation/cyclization region spans residues 69 to 490 (FPLTPVQAAY…GLLRRLAQSP (422 aa)). Residues 520-915 (FAERALLTPD…GREDDQVKIR (396 aa)) form an adenylation region. Residues 1407–1488 (APADELENAL…GLAERLRSAP (82 aa)) form the Carrier domain. At Ser-1442 the chain carries O-(pantetheine 4'-phosphoryl)serine. The interval 1584–1797 (LGRRYAEALH…FDCLGEALAQ (214 aa)) is thioesterase.

Belongs to the NRP synthetase family. It depends on pantetheine 4'-phosphate as a cofactor.

The enzyme catalyses holo-[peptidyl-carrier protein] + L-cysteine + ATP = L-cysteinyl-[peptidyl-carrier protein] + AMP + diphosphate. It participates in siderophore biosynthesis. Involved in the biosynthesis of the siderophore pyochelin. Adenylates L-cysteine and loads it onto its peptidyl carrier domain via a thioester linkage to the phosphopanthetheine moiety. Then forms a peptide bond between the salicyl-thiazolinyl intermediate bound to the second carrier domain of PchE and the cysteine bound to its own peptidyl carrier domain to form the salicyl-thiazolinyl-cysteinyl-S-PCP2 intermediate. It subsequently cyclizes the C-terminal cysteine to form the second thiazoline heterocycle in the salicyl-thiazolinyl-thiazolinyl-S-PCP2 intermediate. When this intermediate is released by the action of a thioesterase, it produces the tricyclic acid hydroxyphenyl-thiazolyl-thiazolinyl-carboxylic acid (HPTT-COOH), an advanced intermediate containing the aryl-4,2-bis-heterocyclic skeleton of the bithiazoline class of siderophores. The protein is Pyochelin synthetase PchF of Pseudomonas aeruginosa (strain ATCC 15692 / DSM 22644 / CIP 104116 / JCM 14847 / LMG 12228 / 1C / PRS 101 / PAO1).